The primary structure comprises 1031 residues: MAFTEANEREVQSSYEKENVKIIREEEAKDQESTDDIAVEDGTGTSPDLNFFSTQNVMQMNFEDEYSEFSNEDDEAEIDNSFADSIPNEPEIPDMQDEYSRDSHSQQSVEEQNNTTNTDEDASVNEFSVAADISDVNTLGKDNSESTEEPVNEVNETATLGNEDVGERSGFPSEGLDNEPESQRDLDETGNLAPEDLKDEVKSVHEFNEPNDLRQQEESYSDDDDTNVNEFEDVNEIENEHQLSVADEDQTSRLVKGKMIFVGKEDFGEEADISNSVFIEQNGPNSDTVSGFKETSSIVNSSSTTEKPGVALDSQNDTSIFNEEQTNSLTETFNDLTLDHLPENVESEPVAGKENETAKNESGASDNDHKANVHVFVLKSSEDAITLNEEKIATQDDPLEAPTPIVASSSTIFLNSNQRNDELSASGSQEPHPKDGTNSTSSLPLDTNNLSNSEPPSHVLDASSETIEVIQTIKKLQNQVPETIKDEVGKKNTAFSPGTSLSTNHVKTKSRSAHNNSTSPFSTAVSSWLNPLRYPSDKSPRVISSYLESVFISKPRSIGDAQKLEILEYLQSQSSTVSNQVFTLLSNFIQNPLFVLDECFDEFRNLILMHNSHTVHTVVWKTISSWTSYDYEMQYSSLSIKNCDSDKAIRKDLDRTFAPEILSHFFSNRQQLEPTDNIAESTANLHRVLRSLAIVLPQVGYTQGMSWIAGALLMHLPAPQAFALLVFLFKNYHLQNIFSSEMRGLSRVLHQFTRLVEDYMPSLAIHFKRQDIKTCSYASEWFLTLFAYKFPLEVVAHLYDILFLYGPGILFNFGLALLSHSQESLLKLNMDRLISYLKEDIFLAFKETQEGENYDTSLFVKTAFSFEIQPDVLDRYGNEYDILLKSEHELDSSLEEMRNRHKSLNEHFIMLSDSMANLQVEHENMSALLLKEKMYLKNQTVEQASLKSEIASLNSQLAKQKSEIEQAFQGDMEAIIAENLEIMVESQSLEDEIFRKEKQLAETKVNLAVLDEDHMMALQKWSQLMNRIKTK.

Positions 1–32 (MAFTEANEREVQSSYEKENVKIIREEEAKDQE) are enriched in basic and acidic residues. Disordered regions lie at residues 1 to 229 (MAFT…TNVN), 278 to 317 (FIEQ…SQND), 339 to 371 (DHLP…DHKA), 420 to 459 (NDEL…PSHV), and 490 to 520 (KKNT…STSP). The segment covering 43 to 59 (TGTSPDLNFFSTQNVMQ) has biased composition (polar residues). The span at 62–78 (FEDEYSEFSNEDDEAEI) shows a compositional bias: acidic residues. The segment covering 105 to 117 (SQQSVEEQNNTTN) has biased composition (polar residues). Residues 195 to 217 (EDLKDEVKSVHEFNEPNDLRQQE) are compositionally biased toward basic and acidic residues. Residues 219–229 (SYSDDDDTNVN) show a composition bias toward acidic residues. A compositionally biased stretch (polar residues) spans 278 to 306 (FIEQNGPNSDTVSGFKETSSIVNSSSTTE). 3 stretches are compositionally biased toward polar residues: residues 420-429 (NDELSASGSQ), 436-455 (GTNS…NSEP), and 493-505 (TAFS…STNH). A Rab-GAP TBC domain is found at 610–806 (HNSHTVHTVV…HLYDILFLYG (197 aa)). A helical transmembrane segment spans residues 798 to 818 (LYDILFLYGPGILFNFGLALL).

The protein belongs to the GYP5 family.

It is found in the membrane. The protein resides in the cytoplasm. GTPase-activating protein involved in ER to Golgi trafficking and polarized exocytosis. This chain is GTPase activating protein Gyp51 (gyp51), found in Schizosaccharomyces pombe (strain 972 / ATCC 24843) (Fission yeast).